The sequence spans 193 residues: Acyl-homoserine-lactone synthase (193 aa).

Belongs to the autoinducer synthase family.

It carries out the reaction a fatty acyl-[ACP] + S-adenosyl-L-methionine = an N-acyl-L-homoserine lactone + S-methyl-5'-thioadenosine + holo-[ACP] + H(+). Functionally, required for the synthesis of OHHL (N-(3-oxohexanoyl)-L-homoserine lactone) also known as VAI or N-(beta-ketocaproyl)homoserine lactone or 3-oxo-N-(tetrahydro-2-oxo-3-furanyl)-hexanamide, an autoinducer molecule which binds to LuxR and thus acts in bioluminescence regulation. This Aliivibrio fischeri (Vibrio fischeri) protein is Acyl-homoserine-lactone synthase (luxI).